We begin with the raw amino-acid sequence, 198 residues long: Septum-promoting GTP-binding protein 1 (198 aa).

The interval 6-198 (KNNVTIKVGM…GDPILEYIDR (193 aa)) is small GTPase-like. GTP is bound by residues 17 to 24 (GDSSIGKT), 65 to 69 (DLGGQ), and 122 to 125 (TKYD).

As to quaternary structure, interacts with cdc7 and cdc11.

In terms of biological role, GTP-binding protein essential for the induction of septum formation at G2 and pre-START stages of mitosis. Acts via the cdc7 protein kinase pathway. This is Septum-promoting GTP-binding protein 1 (spg1) from Schizosaccharomyces pombe (strain 972 / ATCC 24843) (Fission yeast).